The primary structure comprises 85 residues: N.vectensis toxin 1 4 (85 aa).

A signal peptide spans 1 to 20; it reads MASFKIVIVCLALLVAVASA. Residues 21–36 constitute a propeptide that is removed on maturation; that stretch reads RRRDMMSDDELDYHYS. Intrachain disulfides connect cysteine 42-cysteine 82, cysteine 44-cysteine 72, and cysteine 65-cysteine 83.

It belongs to the sea anemone sodium channel inhibitory toxin family. Type II subfamily. Expressed in ectodermal glands and in clumps outside of the extodermal layer. Is not expressed in nematocytes. In adult female tissues, shows similar expression levels in mesenteries (gametes-producing tissue), tentacles, pharynx and physa.

The protein localises to the secreted. Its function is as follows. Binds to site 3 of voltage-gated sodium channels and inhibits the inactivation process. Is highly active on DmNav1/TipE (drosophila) and is only extremely weakly active on rat Nav1.4-beta-1/SCN4A-SCN1B, and on human Nav1.5-beta-1/SCN5A-beta-1. This reveals high specificity for arthropod over mammalian channels. In vivo, when released into the medium, this recombinant toxin induces impaired swimming, paralysis and death of the crustacean A.nauplii within several hours. Also causes paralysis of cherry shrimps immediately after injection at very low doses. Its effect on zebrafish (D.rerio) larvae is also rapid, since it induces tail twitching accompanied by impaired swimming after 20 minutes and complete paralysis within 45 minutes. It has also been observed to cause death of zebrafish larvae within 1 hour. In Nematostella vectensis (Starlet sea anemone), this protein is N.vectensis toxin 1 4.